A 528-amino-acid polypeptide reads, in one-letter code: Succinate-semialdehyde dehydrogenase, mitochondrial (528 aa).

The transit peptide at 1-34 (MVIGAAARVAIGGCRKLISSHTSLLLVSSQCRQM) directs the protein to the mitochondrion. 196 to 198 (TPW) is a binding site for NAD(+). Arg207 contributes to the substrate binding site. Residues 222 to 225 (KPSE), 275 to 280 (GSTAVG), and Glu297 each bind NAD(+). The active-site Proton acceptor is the Glu297. Arg325 provides a ligand contact to substrate. The active-site Nucleophile is the Cys331. A disulfide bond links Cys331 and Cys333. Residue 428–430 (EIF) coordinates NAD(+). Position 488 (Ser488) interacts with substrate.

The protein belongs to the aldehyde dehydrogenase family. In terms of assembly, homotetramer. Expressed in developing leaf tissues.

The protein localises to the mitochondrion matrix. The enzyme catalyses succinate semialdehyde + NAD(+) + H2O = succinate + NADH + 2 H(+). It participates in amino-acid degradation; 4-aminobutanoate degradation. Its activity is regulated as follows. Competitive inhibition by NADH. Inhibited by ATP, ADP and AMP. Redox-regulated. Inhibited under oxydizing conditions. Its function is as follows. Oxidizes specifically succinate semialdehyde. Involved in plant response to environmental stress by preventing the accumulation of reactive oxygen species, probably by regulating proline, gamma-hydroxybutyrate (GHB) and gamma-aminobutyrate (GABA) levels. Required for the maintenance of the shoot apical meristem (SAM) structure and subsequent adaxial-abaxial axis-dependent development of cotyledons and leaves. The protein is Succinate-semialdehyde dehydrogenase, mitochondrial of Arabidopsis thaliana (Mouse-ear cress).